A 403-amino-acid chain; its full sequence is S-adenosylmethionine synthase (403 aa).

141–146 (GQGSVD) contacts ATP.

The protein belongs to the AdoMet synthase 2 family. Mg(2+) serves as cofactor.

The catalysed reaction is L-methionine + ATP + H2O = S-adenosyl-L-methionine + phosphate + diphosphate. It participates in amino-acid biosynthesis; S-adenosyl-L-methionine biosynthesis; S-adenosyl-L-methionine from L-methionine: step 1/1. In terms of biological role, catalyzes the formation of S-adenosylmethionine from methionine and ATP. This is S-adenosylmethionine synthase from Methanococcus aeolicus (strain ATCC BAA-1280 / DSM 17508 / OCM 812 / Nankai-3).